A 456-amino-acid chain; its full sequence is Enolase (456 aa).

Q164 lines the (2R)-2-phosphoglycerate pocket. E207 functions as the Proton donor in the catalytic mechanism. The Mg(2+) site is built by D244, E287, and D314. (2R)-2-phosphoglycerate contacts are provided by K339, R368, S369, and K390. K339 serves as the catalytic Proton acceptor.

This sequence belongs to the enolase family. Component of the RNA degradosome, a multiprotein complex involved in RNA processing and mRNA degradation. Mg(2+) is required as a cofactor.

It is found in the cytoplasm. The protein localises to the secreted. It localises to the cell surface. It catalyses the reaction (2R)-2-phosphoglycerate = phosphoenolpyruvate + H2O. It participates in carbohydrate degradation; glycolysis; pyruvate from D-glyceraldehyde 3-phosphate: step 4/5. Functionally, catalyzes the reversible conversion of 2-phosphoglycerate (2-PG) into phosphoenolpyruvate (PEP). It is essential for the degradation of carbohydrates via glycolysis. This Francisella tularensis subsp. holarctica (strain OSU18) protein is Enolase.